We begin with the raw amino-acid sequence, 396 residues long: Formate-dependent phosphoribosylglycinamide formyltransferase (396 aa).

N(1)-(5-phospho-beta-D-ribosyl)glycinamide is bound by residues glutamate 25–leucine 26 and glutamate 85. ATP contacts are provided by residues arginine 117, lysine 158, serine 163–glutamine 168, glutamate 198–isoleucine 201, and glutamate 206. An ATP-grasp domain is found at arginine 122 to leucine 311. Mg(2+) contacts are provided by glutamate 270 and glutamate 282. N(1)-(5-phospho-beta-D-ribosyl)glycinamide contacts are provided by residues aspartate 289, lysine 359, and arginine 366–arginine 367.

It belongs to the PurK/PurT family. In terms of assembly, homodimer.

It carries out the reaction N(1)-(5-phospho-beta-D-ribosyl)glycinamide + formate + ATP = N(2)-formyl-N(1)-(5-phospho-beta-D-ribosyl)glycinamide + ADP + phosphate + H(+). It participates in purine metabolism; IMP biosynthesis via de novo pathway; N(2)-formyl-N(1)-(5-phospho-D-ribosyl)glycinamide from N(1)-(5-phospho-D-ribosyl)glycinamide (formate route): step 1/1. Involved in the de novo purine biosynthesis. Catalyzes the transfer of formate to 5-phospho-ribosyl-glycinamide (GAR), producing 5-phospho-ribosyl-N-formylglycinamide (FGAR). Formate is provided by PurU via hydrolysis of 10-formyl-tetrahydrofolate. This chain is Formate-dependent phosphoribosylglycinamide formyltransferase, found in Shewanella frigidimarina (strain NCIMB 400).